Consider the following 121-residue polypeptide: Large ribosomal subunit protein bL19 (121 aa).

The protein belongs to the bacterial ribosomal protein bL19 family.

In terms of biological role, this protein is located at the 30S-50S ribosomal subunit interface and may play a role in the structure and function of the aminoacyl-tRNA binding site. This Borrelia garinii subsp. bavariensis (strain ATCC BAA-2496 / DSM 23469 / PBi) (Borreliella bavariensis) protein is Large ribosomal subunit protein bL19.